Here is a 399-residue protein sequence, read N- to C-terminus: Keratin, type I cytoskeletal 19 (399 aa).

Residues 1–78 (MTSYSYRQSS…ATSDGLLAGN (78 aa)) are head. Arg-7 carries the post-translational modification Omega-N-methylarginine. Phosphoserine is present on residues Ser-14 and Ser-22. Arg-24 is subject to Asymmetric dimethylarginine; alternate. Arg-24 carries the omega-N-methylarginine; alternate modification. Position 32 is an omega-N-methylarginine (Arg-32). 2 positions are modified to phosphoserine: Ser-35 and Ser-40. 2 positions are modified to omega-N-methylarginine: Arg-43 and Arg-51. 2 positions are modified to phosphoserine: Ser-57 and Ser-71. Positions 79-114 (EKLTMQNLNDRLASYLEKVRALEEANGDLEVKIRDW) are coil 1A. Residues 79–390 (EKLTMQNLND…NLLEGQDAYF (312 aa)) enclose the IF rod domain. The segment at 115–132 (YQKQGPGPARDYSHYFKT) is linker 1. The tract at residues 133-224 (IEDLRDQILG…KNHEEEMSVL (92 aa)) is coil 1B. The segment at 225–247 (KGQVGGQVSVEVDSAPGIDLAKI) is linker 12. The tract at residues 243 to 389 (DLAKILSDMR…RNLLEGQDAY (147 aa)) is necessary for interaction with PNN. The interval 248–386 (LSDMRSQYEV…ATYRNLLEGQ (139 aa)) is coil 2. Thr-322 is subject to Phosphothreonine. The rod-like helical tail stretch occupies residues 387–399 (DAYFNDLSLAKAL). Ser-394 carries the phosphoserine modification.

This sequence belongs to the intermediate filament family. As to quaternary structure, heterotetramer of two type I and two type II keratins. Interacts with PNN and the actin-binding domain of DMD.

Involved in the organization of myofibers. Together with KRT8, helps to link the contractile apparatus to dystrophin at the costameres of striated muscle. This chain is Keratin, type I cytoskeletal 19 (KRT19), found in Bos taurus (Bovine).